The chain runs to 306 residues: Non-structural protein 3 (306 aa).

The chain is Non-structural protein 3 (Segment-7) from Banna virus (BAV).